Reading from the N-terminus, the 293-residue chain is Undecaprenyl-diphosphatase (293 aa).

6 helical membrane passes run 74 to 94 (VLVFFAKEIWQIITGWFAGVF), 107 to 127 (WMIIVATIPVVILGVLGKDLI), 134 to 154 (MWITASVLILFSLVFILAEKM), 209 to 229 (FLLAIPAVLGSGLYSLPDAFA), 243 to 263 (VGTLFAFVVGYISIAWLMKFV), and 271 to 291 (FAAYRIPAGLLVMLLLALGML).

Belongs to the UppP family.

It is found in the cell membrane. It catalyses the reaction di-trans,octa-cis-undecaprenyl diphosphate + H2O = di-trans,octa-cis-undecaprenyl phosphate + phosphate + H(+). Functionally, catalyzes the dephosphorylation of undecaprenyl diphosphate (UPP). Confers resistance to bacitracin. The sequence is that of Undecaprenyl-diphosphatase from Corynebacterium glutamicum (strain R).